We begin with the raw amino-acid sequence, 78 residues long: Metallothionein-like protein type 2 (78 aa).

Belongs to the metallothionein superfamily. Type 15 family.

Its function is as follows. Metallothioneins have a high content of cysteine residues that bind various heavy metals. The chain is Metallothionein-like protein type 2 from Actinidia deliciosa (Kiwi).